A 306-amino-acid polypeptide reads, in one-letter code: Ribonuclease Z (306 aa).

Positions 63, 65, 67, 68, 141, 211, and 269 each coordinate Zn(2+). Asp-67 (proton acceptor) is an active-site residue.

This sequence belongs to the RNase Z family. As to quaternary structure, homodimer. Zn(2+) serves as cofactor.

The enzyme catalyses Endonucleolytic cleavage of RNA, removing extra 3' nucleotides from tRNA precursor, generating 3' termini of tRNAs. A 3'-hydroxy group is left at the tRNA terminus and a 5'-phosphoryl group is left at the trailer molecule.. Zinc phosphodiesterase, which displays some tRNA 3'-processing endonuclease activity. Probably involved in tRNA maturation, by removing a 3'-trailer from precursor tRNA. The sequence is that of Ribonuclease Z from Staphylococcus haemolyticus (strain JCSC1435).